Consider the following 39-residue polypeptide: Natriuretic peptide CnNP-a (39 aa).

Positions 1-8 (SGSKTAKI) are excised as a propeptide. An intrachain disulfide couples C12 to C28.

It belongs to the natriuretic peptide family. Expressed by the venom gland.

The protein localises to the secreted. Its function is as follows. Snake venom natriuretic peptide that targets both NPR1 and NPR2. Exhibits hypotensive and vasodepressor activities. This is Natriuretic peptide CnNP-a from Cryptophis nigrescens (Eastern small-eyed snake).